Here is a 727-residue protein sequence, read N- to C-terminus: Capsid protein VP1 (727 aa).

Residues 1-10 (MAPPAKRARR) show a composition bias toward basic residues. Disordered stretches follow at residues 1-38 (MAPP…SDAA), 95-120 (VLTD…PPPH), and 141-184 (LAPM…VGIS). The Nuclear localization signal motif lies at 4-13 (PAKRARRGLV). Positions 19 to 64 (YLGPGNSLDQGEPTNPSDAAAKEHDEAYAAYLRSGKNPYLYFSPAD) are phospholipase A2-like. The span at 25–35 (SLDQGEPTNPS) shows a compositional bias: polar residues. A compositionally biased stretch (gly residues) spans 166–183 (SGNGSGGGGGGGSGGVGI). N323 serves as a coordination point for Mg(2+). A disulfide bridge connects residues C633 and C637.

Belongs to the parvoviridae capsid protein family. As to quaternary structure, interacts with host TFRC.

Its subcellular location is the virion. The protein localises to the host nucleus. Functionally, capsid protein self-assembles to form an icosahedral capsid with a T=1 symmetry, about 22 nm in diameter, and consisting of 60 copies of two size variants of the capsid proteins, VP1 and VP2, which differ by the presence of an N-terminal extension in the minor protein VP1. The capsid encapsulates the genomic ssDNA. Capsid proteins are responsible for the attachment to host cell receptors. This attachment induces virion internalization predominantly through clathrin-dependent endocytosis. Binding to the host receptors also induces capsid rearrangements leading to surface exposure of VP1 N-terminus, specifically its phospholipase A2-like region and putative nuclear localization signal(s). VP1 N-terminus might serve as a lipolytic enzyme to breach the endosomal membrane during entry into host cell and might contribute to virus transport to the nucleus. The chain is Capsid protein VP1 from Feline panleukopenia virus (strain 193) (FPV).